A 616-amino-acid chain; its full sequence is Chaperone protein HscA (616 aa).

This sequence belongs to the heat shock protein 70 family.

Chaperone involved in the maturation of iron-sulfur cluster-containing proteins. Has a low intrinsic ATPase activity which is markedly stimulated by HscB. Involved in the maturation of IscU. The polypeptide is Chaperone protein HscA (Escherichia fergusonii (strain ATCC 35469 / DSM 13698 / CCUG 18766 / IAM 14443 / JCM 21226 / LMG 7866 / NBRC 102419 / NCTC 12128 / CDC 0568-73)).